The sequence spans 259 residues: ATP synthase subunit a (259 aa).

The propeptide at 1–10 (MFNLLNTYIT) is removed in mature form. Helical transmembrane passes span 36 to 56 (LTTFSLYTIIVLLVITSLYTL), 92 to 112 (WGLYFPMIFTLFMFIFIANLI), 125 to 145 (LVFIISLSIVIWLGNTILGLY), 150 to 170 (VFFSLFVPAGTPLPLVPLLVI), 191 to 211 (ILAGHLLMVILAGLTFNFMLI), and 216 to 236 (LVFGFVPLAMILAIMMLEFAI).

The protein belongs to the ATPase A chain family. In terms of assembly, F-type ATPases have 2 components, CF(1) - the catalytic core - and CF(0) - the membrane proton channel. In yeast, the dimeric form of ATP synthase consists of 17 polypeptides: alpha, beta, gamma, delta, epsilon, 4 (B), 5 (OSCP), 6 (A), 8, 9 (C), d, E (Tim11), f, g, h, i/j and k.

Its subcellular location is the mitochondrion inner membrane. In terms of biological role, mitochondrial membrane ATP synthase (F(1)F(0) ATP synthase or Complex V) produces ATP from ADP in the presence of a proton gradient across the membrane which is generated by electron transport complexes of the respiratory chain. F-type ATPases consist of two structural domains, F(1) - containing the extramembraneous catalytic core and F(0) - containing the membrane proton channel, linked together by a central stalk and a peripheral stalk. During catalysis, ATP synthesis in the catalytic domain of F(1) is coupled via a rotary mechanism of the central stalk subunits to proton translocation. Key component of the proton channel; it may play a direct role in the translocation of protons across the membrane. The polypeptide is ATP synthase subunit a (ATP6) (Saccharomyces cerevisiae (strain ATCC 204508 / S288c) (Baker's yeast)).